The following is a 220-amino-acid chain: Ribosome biogenesis protein 15 (220 aa).

The tract at residues 1-82 is disordered; sequence MVKSTSKTST…KQANEKKSKD (82 aa). The segment covering 9-30 has biased composition (basic and acidic residues); that stretch reads STKETVTKQPTEEKPIQEKEEL. The segment covering 39-60 has biased composition (acidic residues); the sequence is SDEEDEKDEDEIEGLAASDDEQ. Positions 91–169 constitute an RRM domain; it reads GIIYVSRLPH…HLLQVRVLPK (79 aa).

As to quaternary structure, component of the pre-66S ribosomal particle. Interacts with NOP7 and RRP1.

The protein resides in the cytoplasm. It is found in the nucleus. The protein localises to the nucleolus. Involved in the biogenesis of the 60S ribosomal subunit. Required for pre-rRNA processing and cytokinesis. Associates with the precursors of the 25S and 5.8S rRNAs. This is Ribosome biogenesis protein 15 from Saccharomyces cerevisiae (strain ATCC 204508 / S288c) (Baker's yeast).